The chain runs to 93 residues: Acylphosphatase (93 aa).

The Acylphosphatase-like domain occupies C7 to R93. Active-site residues include R22 and N40.

This sequence belongs to the acylphosphatase family.

It carries out the reaction an acyl phosphate + H2O = a carboxylate + phosphate + H(+). In Acaryochloris marina (strain MBIC 11017), this protein is Acylphosphatase (acyP).